The following is a 350-amino-acid chain: tRNA N6-adenosine threonylcarbamoyltransferase (350 aa).

The Fe cation site is built by H113 and H117. Substrate is bound by residues 135–139 (LVSGG), D169, G182, D186, and N282. D310 contributes to the Fe cation binding site.

It belongs to the KAE1 / TsaD family. Fe(2+) is required as a cofactor.

The protein localises to the cytoplasm. It catalyses the reaction L-threonylcarbamoyladenylate + adenosine(37) in tRNA = N(6)-L-threonylcarbamoyladenosine(37) in tRNA + AMP + H(+). Required for the formation of a threonylcarbamoyl group on adenosine at position 37 (t(6)A37) in tRNAs that read codons beginning with adenine. Is involved in the transfer of the threonylcarbamoyl moiety of threonylcarbamoyl-AMP (TC-AMP) to the N6 group of A37, together with TsaE and TsaB. TsaD likely plays a direct catalytic role in this reaction. This is tRNA N6-adenosine threonylcarbamoyltransferase from Corynebacterium diphtheriae (strain ATCC 700971 / NCTC 13129 / Biotype gravis).